The primary structure comprises 164 residues: Pyruvoyl-dependent arginine decarboxylase (164 aa).

The residue at position 52 (serine 52) is a Pyruvic acid (Ser).

The protein belongs to the PdaD family. Pyruvate serves as cofactor.

The catalysed reaction is L-arginine + H(+) = agmatine + CO2. The polypeptide is Pyruvoyl-dependent arginine decarboxylase (Methanococcus maripaludis (strain C7 / ATCC BAA-1331)).